Here is a 247-residue protein sequence, read N- to C-terminus: MSSSDCPSPLPTAPKLQVDSVTFPPSVISPASSNTLFLGGAGVRGLEIQGKFVIFTVIGVYLDPVSVPSLSVKWEGKTTEELTESVPFFREIVIGAFEKFIKVTMKLPLTGQQYSEKVTENCVAIWKSLGIYTDSEAKAVERFLEVFKDETFPPGASILFALSPEGSLTVAFSKDDSIPETGKAVIENKLLAEAVLESIIGKNRVSPGARLRVAERLAQLMKENKVEEDATKTDQEEANDLSLAKEN.

Residues T56, N121, and S198 each coordinate substrate. Residues 223–235 (ENKVEEDATKTDQ) show a composition bias toward basic and acidic residues. Residues 223-247 (ENKVEEDATKTDQEEANDLSLAKEN) form a disordered region.

It belongs to the chalcone isomerase family.

The enzyme catalyses a chalcone = a flavanone.. It participates in secondary metabolite biosynthesis; flavonoid biosynthesis. Catalyzes the intramolecular cyclization of bicyclic chalcones into tricyclic (S)-flavanones. Responsible for the isomerization of 4,2',4',6'-tetrahydroxychalcone (also termed chalcone) into naringenin. The polypeptide is Chalcone--flavanone isomerase (CHI) (Raphanus sativus (Radish)).